Here is a 245-residue protein sequence, read N- to C-terminus: 1-(5-phosphoribosyl)-5-[(5-phosphoribosylamino)methylideneamino] imidazole-4-carboxamide isomerase (245 aa).

Aspartate 7 functions as the Proton acceptor in the catalytic mechanism. Aspartate 129 acts as the Proton donor in catalysis.

The protein belongs to the HisA/HisF family.

The protein resides in the cytoplasm. The enzyme catalyses 1-(5-phospho-beta-D-ribosyl)-5-[(5-phospho-beta-D-ribosylamino)methylideneamino]imidazole-4-carboxamide = 5-[(5-phospho-1-deoxy-D-ribulos-1-ylimino)methylamino]-1-(5-phospho-beta-D-ribosyl)imidazole-4-carboxamide. It participates in amino-acid biosynthesis; L-histidine biosynthesis; L-histidine from 5-phospho-alpha-D-ribose 1-diphosphate: step 4/9. This chain is 1-(5-phosphoribosyl)-5-[(5-phosphoribosylamino)methylideneamino] imidazole-4-carboxamide isomerase, found in Shewanella sp. (strain ANA-3).